The following is a 221-amino-acid chain: Transcription factor MYB1 (221 aa).

HTH myb-type domains follow at residues 1-57 and 58-112; these read MESV…LNYL and RPNI…QKKL. 2 DNA-binding regions (H-T-H motif) span residues 33–57 and 85–108; these read WHQV…LNYL and WSLI…NTHL. A disordered region spans residues 126-154; the sequence is KTIVPKGTEAQPRAHPKSPPRPSPPSNNE.

Expressed in stems and leaves. Expressed at low levels in ovaries.

Its subcellular location is the nucleus. In terms of biological role, transcription activator involved in the regulation of anthocyanin biosynthesis in red-fleshed kiwifruit varieties. Activates the transcription of genes involved in anthocyanin biosynthesis, such as dihydroflavonol reductase (DFR), anthocyanidin synthase (ANS) and UDP flavonoid glycosyltransferase (UFGT). This chain is Transcription factor MYB1, found in Actinidia chinensis var. chinensis (Chinese soft-hair kiwi).